The following is a 212-amino-acid chain: Protein RER1C (212 aa).

At methionine 1 the chain carries N-acetylmethionine. 4 helical membrane-spanning segments follow: residues 55–75 (TVPH…IYIV), 82–102 (GFYI…IAFL), 135–155 (EFKF…MTFF), and 157–177 (VFDV…LFFL).

The protein belongs to the RER1 family.

It localises to the membrane. Its function is as follows. Involved in the retrieval of endoplasmic reticulum membrane proteins from the early Golgi compartment. This chain is Protein RER1C (RER1C), found in Arabidopsis thaliana (Mouse-ear cress).